The chain runs to 384 residues: Small ribosomal subunit protein mS31 (384 aa).

Residues 1-54 constitute a mitochondrion transit peptide; that stretch reads MLHRIPAFLRPRPFSGLPLSCGNRDVSVAVLPAAQSGAVRTENNIQRHFCTSRS. Residues 101 to 136 form a disordered region; the sequence is TANVKTPKPRGRKPSASLEATVDRLQKAPEDPPKKR. Basic and acidic residues predominate over residues 121 to 136; it reads TVDRLQKAPEDPPKKR.

This sequence belongs to the mitochondrion-specific ribosomal protein mS31 family. In terms of assembly, component of the mitochondrial ribosome small subunit (28S) which comprises a 12S rRNA and about 30 distinct proteins.

The protein resides in the mitochondrion. This Mus musculus (Mouse) protein is Small ribosomal subunit protein mS31 (Mrps31).